A 341-amino-acid chain; its full sequence is MSSTAIVSGDESLEPTLQNLLDQKTLRWVFVGGKGGVGKTTTSCSLAIQLAKVRKSVLLISTDPAHNLSDAFGQKFGKEARLIDGFDNLSAMEIDPNGSIQDLLAAGGDQADDPMGGLGLGGMMQDLAFSIPGVDEAMSFAEVLKQVKSLSYEVIIFDTAPTGHTLRFLQFPTVLEKALGKLSQLSSQFGPMLNSVLGARGGLPGGQNLDEILSKMESLRETIGEVNAQFKDADLTTFVCVCIAEFLSLYETERMIQELTSYQIDTHCIVVNQLLFPGKDSSCEQCKARRKMQKKYLNEIEELYEDFNVVRMPMLVEEVRGKEKLEKFSNMLINPYIPPQE.

An ATP-binding site is contributed by 34–41 (KGGVGKTT). The active site involves Asp-63. Positions 245 and 272 each coordinate ATP. Positions 283 and 286 each coordinate Zn(2+).

Belongs to the arsA ATPase family. In terms of assembly, homodimer.

It is found in the cytoplasm. It localises to the endoplasmic reticulum. Its function is as follows. ATPase required for the post-translational delivery of tail-anchored (TA) proteins to the endoplasmic reticulum. Recognizes and selectively binds the transmembrane domain of TA proteins in the cytosol. This complex then targets to the endoplasmic reticulum by membrane-bound receptors, where the tail-anchored protein is released for insertion. This process is regulated by ATP binding and hydrolysis. ATP binding drives the homodimer towards the closed dimer state, facilitating recognition of newly synthesized TA membrane proteins. ATP hydrolysis is required for insertion. Subsequently, the homodimer reverts towards the open dimer state, lowering its affinity for the membrane-bound receptor, and returning it to the cytosol to initiate a new round of targeting. This Ajellomyces dermatitidis (strain ER-3 / ATCC MYA-2586) (Blastomyces dermatitidis) protein is ATPase GET3.